Consider the following 890-residue polypeptide: Alanine--tRNA ligase (890 aa).

The Zn(2+) site is built by His-564, His-568, Cys-677, and His-681.

This sequence belongs to the class-II aminoacyl-tRNA synthetase family. It depends on Zn(2+) as a cofactor.

The protein resides in the cytoplasm. The enzyme catalyses tRNA(Ala) + L-alanine + ATP = L-alanyl-tRNA(Ala) + AMP + diphosphate. Functionally, catalyzes the attachment of alanine to tRNA(Ala) in a two-step reaction: alanine is first activated by ATP to form Ala-AMP and then transferred to the acceptor end of tRNA(Ala). Also edits incorrectly charged Ser-tRNA(Ala) and Gly-tRNA(Ala) via its editing domain. This chain is Alanine--tRNA ligase, found in Rhodopseudomonas palustris (strain BisB18).